We begin with the raw amino-acid sequence, 78 residues long: Large ribosomal subunit protein bL28 (78 aa).

Belongs to the bacterial ribosomal protein bL28 family.

In Prochlorococcus marinus (strain MIT 9515), this protein is Large ribosomal subunit protein bL28.